Consider the following 213-residue polypeptide: Probable transaldolase (213 aa).

The active-site Schiff-base intermediate with substrate is the lysine 83.

Belongs to the transaldolase family. Type 3B subfamily.

The protein resides in the cytoplasm. The catalysed reaction is D-sedoheptulose 7-phosphate + D-glyceraldehyde 3-phosphate = D-erythrose 4-phosphate + beta-D-fructose 6-phosphate. It functions in the pathway carbohydrate degradation; pentose phosphate pathway; D-glyceraldehyde 3-phosphate and beta-D-fructose 6-phosphate from D-ribose 5-phosphate and D-xylulose 5-phosphate (non-oxidative stage): step 2/3. In terms of biological role, transaldolase is important for the balance of metabolites in the pentose-phosphate pathway. This is Probable transaldolase from Geobacillus kaustophilus (strain HTA426).